A 115-amino-acid chain; its full sequence is Large ribosomal subunit protein bL19 (115 aa).

Belongs to the bacterial ribosomal protein bL19 family.

Functionally, this protein is located at the 30S-50S ribosomal subunit interface and may play a role in the structure and function of the aminoacyl-tRNA binding site. The chain is Large ribosomal subunit protein bL19 from Streptococcus equi subsp. zooepidemicus (strain H70).